The following is an 87-amino-acid chain: Sec-independent protein translocase protein TatA (87 aa).

Residues Gly-3 to Ala-23 form a helical membrane-spanning segment. Residues Met-47 to Ala-87 form a disordered region. Residues Pro-52 to Ala-87 show a composition bias toward low complexity.

The protein belongs to the TatA/E family. The Tat system comprises two distinct complexes: a TatABC complex, containing multiple copies of TatA, TatB and TatC subunits, and a separate TatA complex, containing only TatA subunits. Substrates initially bind to the TatABC complex, which probably triggers association of the separate TatA complex to form the active translocon.

The protein resides in the cell membrane. Its function is as follows. Part of the twin-arginine translocation (Tat) system that transports large folded proteins containing a characteristic twin-arginine motif in their signal peptide across membranes. TatA could form the protein-conducting channel of the Tat system. The polypeptide is Sec-independent protein translocase protein TatA (Nocardia farcinica (strain IFM 10152)).